Reading from the N-terminus, the 307-residue chain is Putative lipid kinase SERP0390 (307 aa).

The DAGKc domain occupies 3–139 (QPYNHGVLFY…YDVLKVNDLY (137 aa)). ATP contacts are provided by residues S44, 74 to 80 (GDGTLNE), and T101. Mg(2+) contacts are provided by S220, D223, and R225. The active-site Proton acceptor is E281.

It belongs to the diacylglycerol/lipid kinase family. Mg(2+) serves as cofactor.

Functionally, may catalyze the ATP-dependent phosphorylation of lipids other than diacylglycerol (DAG). The polypeptide is Putative lipid kinase SERP0390 (Staphylococcus epidermidis (strain ATCC 35984 / DSM 28319 / BCRC 17069 / CCUG 31568 / BM 3577 / RP62A)).